The chain runs to 1379 residues: DNA-directed RNA polymerase subunit beta (1379 aa).

It belongs to the RNA polymerase beta chain family. In plastids the minimal PEP RNA polymerase catalytic core is composed of four subunits: alpha, beta, beta', and beta''. When a (nuclear-encoded) sigma factor is associated with the core the holoenzyme is formed, which can initiate transcription.

It is found in the plastid. The protein localises to the chloroplast. It catalyses the reaction RNA(n) + a ribonucleoside 5'-triphosphate = RNA(n+1) + diphosphate. In terms of biological role, DNA-dependent RNA polymerase catalyzes the transcription of DNA into RNA using the four ribonucleoside triphosphates as substrates. The sequence is that of DNA-directed RNA polymerase subunit beta from Trieres chinensis (Marine centric diatom).